Reading from the N-terminus, the 73-residue chain is Kazal peptide Pr13a (73 aa).

The N-terminal stretch at M1 to G20 is a signal peptide. The Kazal-like domain maps to S21–C73. Cystine bridges form between C23-C59, C27-C52, and C36-C73.

As to expression, expressed by the venom gland (anterior main gland) (at protein level).

The protein localises to the secreted. May act as a serine protease inhibitor, since it possess the kazal serine protease inhibitor signature. In Platymeris rhadamanthus (Red spot assassin bug), this protein is Kazal peptide Pr13a.